Reading from the N-terminus, the 359-residue chain is Aromatic amino acid aminotransferase (359 aa).

K223 carries the post-translational modification N6-(pyridoxal phosphate)lysine.

This sequence belongs to the class-II pyridoxal-phosphate-dependent aminotransferase family. Homodimer. It depends on pyridoxal 5'-phosphate as a cofactor.

The catalysed reaction is an aromatic L-alpha-amino acid + 2-oxoglutarate = an aromatic oxo-acid + L-glutamate. Aminotransferase that catalyzes the conversion of aromatic amino acids and 2-oxoglutarate into corresponding aromatic oxo acids and L-glutamate. This Streptomyces avermitilis (strain ATCC 31267 / DSM 46492 / JCM 5070 / NBRC 14893 / NCIMB 12804 / NRRL 8165 / MA-4680) protein is Aromatic amino acid aminotransferase.